The following is a 520-amino-acid chain: Tetratricopeptide repeat protein 6 (520 aa).

TPR repeat units follow at residues 57-90, 101-138, 139-172, 176-209, 210-243, 245-280, 281-314, 320-347, 348-381, 382-415, 416-449, 450-483, and 484-517; these read MTMC…ISHS, ADCL…DKNS, YTAF…DATE, LNTF…SRTN, GSLC…NPCF, DAYV…NPAY, IKAR…DPKN, GRAV…ISTT, AEFL…NPKY, SLAY…DPEN, EYVL…CPFW, AAVY…KPND, and ALVY…EDYA.

In Homo sapiens (Human), this protein is Tetratricopeptide repeat protein 6.